A 473-amino-acid polypeptide reads, in one-letter code: Argininosuccinate lyase (473 aa).

The 2-(N(omega)-L-arginino)succinate site is built by Ser34, Asn121, and Thr166. His167 acts as the Proton acceptor in catalysis. Ser289 (proton donor) is an active-site residue. 3 residues coordinate 2-(N(omega)-L-arginino)succinate: Asn297, Tyr329, and Gln334.

This sequence belongs to the lyase 1 family. Argininosuccinate lyase subfamily.

It carries out the reaction 2-(N(omega)-L-arginino)succinate = fumarate + L-arginine. Its pathway is amino-acid biosynthesis; L-arginine biosynthesis; L-arginine from L-ornithine and carbamoyl phosphate: step 3/3. This is Argininosuccinate lyase (ARG7) from Chlamydomonas reinhardtii (Chlamydomonas smithii).